The sequence spans 160 residues: Transcription elongation factor GreA (160 aa).

Residues 10 to 37 are a coiled coil; that stretch reads TLEGKAKLENELQELKTVKRKEVVERIK.

Belongs to the GreA/GreB family.

Necessary for efficient RNA polymerase transcription elongation past template-encoded arresting sites. The arresting sites in DNA have the property of trapping a certain fraction of elongating RNA polymerases that pass through, resulting in locked ternary complexes. Cleavage of the nascent transcript by cleavage factors such as GreA or GreB allows the resumption of elongation from the new 3'terminus. GreA releases sequences of 2 to 3 nucleotides. The sequence is that of Transcription elongation factor GreA from Listeria welshimeri serovar 6b (strain ATCC 35897 / DSM 20650 / CCUG 15529 / CIP 8149 / NCTC 11857 / SLCC 5334 / V8).